The chain runs to 1272 residues: Ubiquitin carboxyl-terminal hydrolase 2 (1272 aa).

The region spanning 736–1258 is the USP domain; it reads TGINNIGNTC…TPYFLVYVKQ (523 aa). Cys-745 serves as the catalytic Nucleophile. The interval 884 to 918 is disordered; that stretch reads DGLNGDVGTDANRKKNESNDAEVSENEDTTGLTSP. Residues 902–911 show a composition bias toward acidic residues; sequence NDAEVSENED. Ser-907 is modified (phosphoserine). His-1209 (proton acceptor) is an active-site residue.

This sequence belongs to the peptidase C19 family. As to quaternary structure, forms a ternary complex with RSP5 and RUP1. Interacts with RSP5. Interacts with FZO1.

The enzyme catalyses Thiol-dependent hydrolysis of ester, thioester, amide, peptide and isopeptide bonds formed by the C-terminal Gly of ubiquitin (a 76-residue protein attached to proteins as an intracellular targeting signal).. In terms of biological role, has an ATP-independent isopeptidase activity, cleaving at the C-terminus of the ubiquitin moiety in natural or engineered linear fusion proteins, irrespective of their size or the presence of an N-terminal extension to ubiquitin. Hydrolyzes polyubiquitinated 'Lys-63' polyubiquitin chains in RPO21, producing mono-ubiquitinated RNA polymerase II. Removes ubiquitin chains that initiate proteolysis of FZO1 and inhibit mitochondrial fusion. The protein is Ubiquitin carboxyl-terminal hydrolase 2 (UBP2) of Saccharomyces cerevisiae (strain ATCC 204508 / S288c) (Baker's yeast).